Reading from the N-terminus, the 158-residue chain is Transcription elongation factor GreA (158 aa).

Residues 4-75 are a coiled coil; it reads EKTYPMTQEG…TQLENMIRNA (72 aa).

The protein belongs to the GreA/GreB family.

In terms of biological role, necessary for efficient RNA polymerase transcription elongation past template-encoded arresting sites. The arresting sites in DNA have the property of trapping a certain fraction of elongating RNA polymerases that pass through, resulting in locked ternary complexes. Cleavage of the nascent transcript by cleavage factors such as GreA or GreB allows the resumption of elongation from the new 3'terminus. GreA releases sequences of 2 to 3 nucleotides. This Bacillus cereus (strain ATCC 10987 / NRS 248) protein is Transcription elongation factor GreA.